The primary structure comprises 214 residues: Osteoclast-stimulating factor 1 (214 aa).

The residue at position 2 (Ser2) is an N-acetylserine. Residues 12–71 enclose the SH3 domain; that stretch reads GQVKVFRALYTFEPRTPDELYFEEGDIIYITDMSDTSWWKGTCKGRTGLIPSNYVAEQAE. 3 ANK repeats span residues 72-101, 105-135, and 139-168; these read SIDN…GVNG, AGST…ELNQ, and LGDT…RTDL. Thr200 is subject to Phosphothreonine. A phosphoserine mark is found at Ser202 and Ser213.

As to quaternary structure, interacts with SRC and SMN1. Interacts with FASLG.

It is found in the cytoplasm. In terms of biological role, induces bone resorption, acting probably through a signaling cascade which results in the secretion of factor(s) enhancing osteoclast formation and activity. This chain is Osteoclast-stimulating factor 1 (Ostf1), found in Rattus norvegicus (Rat).